A 474-amino-acid chain; its full sequence is Tocopherol cyclase, chloroplastic (474 aa).

The N-terminal 65 residues, Met-1–Arg-65, are a transit peptide targeting the chloroplast.

As to expression, present in all green tissues, both in bundle sheath and in mesophyll cells.

Its subcellular location is the plastid. The protein localises to the chloroplast. It carries out the reaction gamma-tocopherol = 2,3-dimethyl-6-phytylbenzene-1,4-diol. It functions in the pathway cofactor biosynthesis; tocopherol biosynthesis. Its function is as follows. Involved in the synthesis of tocopherols (vitamin E), which presumably protect photosynthetic complexes from oxidative stress. Catalyzes the conversion of 2,3-dimethyl-5-phytyl-1,4-hydroquinone (DMPQ) to gamma-tocopherol. This chain is Tocopherol cyclase, chloroplastic, found in Zea mays (Maize).